The sequence spans 833 residues: AdoMet-dependent rRNA methyltransferase SPB1 (833 aa).

5 residues coordinate S-adenosyl-L-methionine: Gly-59, Trp-61, Asp-79, Asp-95, and Asp-120. Lys-160 acts as the Proton acceptor in catalysis. Coiled coils occupy residues 348-389 (EEEQ…QLNM) and 453-481 (RDELAEADELESQLDAMYSNYKERKSERD). The segment covering 477 to 493 (KSERDAKFRAKQARESS) has biased composition (basic and acidic residues). Disordered regions lie at residues 477 to 532 (KSER…SDDD), 592 to 645 (KRKL…EKHS), and 776 to 810 (VTKKAKQKPKVTVVVASGKNRGLSGRPKGVKGKYK). Acidic residues-rich tracts occupy residues 505-532 (QSDEENEEETKDYVDDDDNSDLSDSDDD) and 622-634 (EDGDVDSEYDSEE). Basic and acidic residues predominate over residues 635-645 (EAKRTKQEKHS). Residues 730–782 (AEAKARKKHRAVARLEKLKKKAGLINDDSDKSEKDKAEEIAKLMRKVTKKAKQ) are a coiled coil.

This sequence belongs to the class I-like SAM-binding methyltransferase superfamily. RNA methyltransferase RlmE family. SPB1 subfamily. In terms of assembly, component of the nucleolar and nucleoplasmic pre-60S ribosomal particle.

It is found in the nucleus. It localises to the nucleolus. It carries out the reaction a ribonucleotide in rRNA + S-adenosyl-L-methionine = a 2'-O-methylribonucleotide in rRNA + S-adenosyl-L-homocysteine + H(+). Required for proper assembly of pre-ribosomal particles during the biogenesis of the 60S ribosomal subunit. This chain is AdoMet-dependent rRNA methyltransferase SPB1, found in Kluyveromyces lactis (strain ATCC 8585 / CBS 2359 / DSM 70799 / NBRC 1267 / NRRL Y-1140 / WM37) (Yeast).